Reading from the N-terminus, the 330-residue chain is GTPase Obg (330 aa).

An Obg domain is found at 1–159 (MNFIDEVKIY…MWIHLSLKLL (159 aa)). In terms of domain architecture, OBG-type G spans 160-327 (SDVGLVGLPN…IVKLALKIIK (168 aa)). GTP-binding positions include 166 to 173 (GLPNAGKS), 191 to 195 (FTTLV), 212 to 215 (DIPG), 279 to 282 (NKCD), and 308 to 310 (STY). Mg(2+) is bound by residues Ser-173 and Thr-193.

The protein belongs to the TRAFAC class OBG-HflX-like GTPase superfamily. OBG GTPase family. As to quaternary structure, monomer. Requires Mg(2+) as cofactor.

Its subcellular location is the cytoplasm. Its function is as follows. An essential GTPase which binds GTP, GDP and possibly (p)ppGpp with moderate affinity, with high nucleotide exchange rates and a fairly low GTP hydrolysis rate. Plays a role in control of the cell cycle, stress response, ribosome biogenesis and in those bacteria that undergo differentiation, in morphogenesis control. In Rickettsia akari (strain Hartford), this protein is GTPase Obg.